The primary structure comprises 211 residues: Thiamine-phosphate synthase (211 aa).

Residues 37 to 41 (QLRIK) and asparagine 69 each bind 4-amino-2-methyl-5-(diphosphooxymethyl)pyrimidine. Residues aspartate 70 and aspartate 89 each coordinate Mg(2+). Serine 108 serves as a coordination point for 4-amino-2-methyl-5-(diphosphooxymethyl)pyrimidine. 134 to 136 (TQT) serves as a coordination point for 2-[(2R,5Z)-2-carboxy-4-methylthiazol-5(2H)-ylidene]ethyl phosphate. 4-amino-2-methyl-5-(diphosphooxymethyl)pyrimidine is bound at residue lysine 137. 2-[(2R,5Z)-2-carboxy-4-methylthiazol-5(2H)-ylidene]ethyl phosphate is bound by residues glycine 166 and 186 to 187 (IS).

It belongs to the thiamine-phosphate synthase family. It depends on Mg(2+) as a cofactor.

It catalyses the reaction 2-[(2R,5Z)-2-carboxy-4-methylthiazol-5(2H)-ylidene]ethyl phosphate + 4-amino-2-methyl-5-(diphosphooxymethyl)pyrimidine + 2 H(+) = thiamine phosphate + CO2 + diphosphate. The catalysed reaction is 2-(2-carboxy-4-methylthiazol-5-yl)ethyl phosphate + 4-amino-2-methyl-5-(diphosphooxymethyl)pyrimidine + 2 H(+) = thiamine phosphate + CO2 + diphosphate. It carries out the reaction 4-methyl-5-(2-phosphooxyethyl)-thiazole + 4-amino-2-methyl-5-(diphosphooxymethyl)pyrimidine + H(+) = thiamine phosphate + diphosphate. Its pathway is cofactor biosynthesis; thiamine diphosphate biosynthesis; thiamine phosphate from 4-amino-2-methyl-5-diphosphomethylpyrimidine and 4-methyl-5-(2-phosphoethyl)-thiazole: step 1/1. Functionally, condenses 4-methyl-5-(beta-hydroxyethyl)thiazole monophosphate (THZ-P) and 2-methyl-4-amino-5-hydroxymethyl pyrimidine pyrophosphate (HMP-PP) to form thiamine monophosphate (TMP). In Shigella boydii serotype 4 (strain Sb227), this protein is Thiamine-phosphate synthase.